The following is a 45-amino-acid chain: Large ribosomal subunit protein bL34 (45 aa).

The interval 1-27 (MTKRTLGGTSRKRKRVSGFRVRMRTHT) is disordered. Residues 10 to 27 (SRKRKRVSGFRVRMRTHT) are compositionally biased toward basic residues.

It belongs to the bacterial ribosomal protein bL34 family.

The sequence is that of Large ribosomal subunit protein bL34 from Prochlorococcus marinus (strain MIT 9211).